A 418-amino-acid chain; its full sequence is tRNA-2-methylthio-N(6)-dimethylallyladenosine synthase (418 aa).

One can recognise an MTTase N-terminal domain in the interval 2-118; that stretch reads PGYYLWTIGC…WGEIPEGFIL (117 aa). 6 residues coordinate [4Fe-4S] cluster: Cys-11, Cys-47, Cys-81, Cys-134, Cys-138, and Cys-141. The region spanning 120 to 352 is the Radical SAM core domain; that stretch reads LKPPVSASIT…DLQKETVSKA (233 aa). The TRAM domain occupies 354-414; that stretch reads SALVDTFAEV…PWSLQAKLVK (61 aa).

It belongs to the methylthiotransferase family. MiaB subfamily. In terms of assembly, monomer. It depends on [4Fe-4S] cluster as a cofactor.

The protein localises to the cytoplasm. The enzyme catalyses N(6)-dimethylallyladenosine(37) in tRNA + (sulfur carrier)-SH + AH2 + 2 S-adenosyl-L-methionine = 2-methylsulfanyl-N(6)-dimethylallyladenosine(37) in tRNA + (sulfur carrier)-H + 5'-deoxyadenosine + L-methionine + A + S-adenosyl-L-homocysteine + 2 H(+). In terms of biological role, catalyzes the methylthiolation of N6-(dimethylallyl)adenosine (i(6)A), leading to the formation of 2-methylthio-N6-(dimethylallyl)adenosine (ms(2)i(6)A) at position 37 in tRNAs that read codons beginning with uridine. This chain is tRNA-2-methylthio-N(6)-dimethylallyladenosine synthase, found in Dehalococcoides mccartyi (strain ATCC BAA-2266 / KCTC 15142 / 195) (Dehalococcoides ethenogenes (strain 195)).